We begin with the raw amino-acid sequence, 935 residues long: MRRIDKIYHQLKHNFHDSTLDHLLKIQGNSAKEIAEQLKMERSNVSFELNNLVRSKKVIKIKTFPVRYIPVEIAEKLFNKKWDTEMMEVKDLQAFSGNSKQNHQHISTNPLELMIGAKGSLKKAISQAKAAVFYPPNGLHMLLLGPTGSGKSLFANRIYQFAIYSDILKAGAPFITFNCADYYNNPQLLLSQLFGHKKGSFTGAAEDKAGLVEQANGGILFMDEIHRLPPEGQEMLFYFIDSGSYNRLGESEHKRTSNVLFICATTENPSSALLKTFLRRIPMTIHIPSLEERSLNERVDLTTFLLGKEAERIKKNLSVHIDVYNALIHSAKFGNVGQLKSNVQLVCAHGFLHNLDRNEVIELTVRDLPDEIKQEWMSSSKNMQRSKAISEYVNITTIISPIVEDETTKIDEDLSFNLYHLIEEKVKTLMKEGLSKKDINQYILTDVHLHVRSFFHHQAFQKDNLLTFVEDDVIQMTKQLKEIAEHELDCTFDRKFIYFLSMHIDAFLKRGKQIDVLNTQETDEIRDTHVKEYRVAMIFKDKIQEYFKVAIPEIEVIYLTMLIHSIKSLKENKRVGIIVAAHGNSTASSMVEVATELLGSTPIAAVDMPLTVSPSDILECVAEKMKQVDEGEGVLMLVDMGSLAMLESRLEEKTGISIKTISNVTTSMVLDAVRKVNYLNLNLHAIYQSVTKDFIELWERQPAASGKKKALVSICTTGSGTAKKLEDILTTIVNKASDTPIHILTVSSIKLANSIKEIEKEYEILATVGTKDPKINAPHVSLEVLIEGEGEKLIQQAITKGSISLSNGLNEANIIVRELCEDSLKKYLVFLNPHHVIDMLLEWLQTVQDELGVIFNNAVLIKVIMHTAFAFERVIKQNPIAFSEEEEINDQLKEMVYVTERTLAPYEEKLGLRISDDEKLFIAAIFAEEVHGQLF.

A Sigma-54 factor interaction domain is found at 117–348; that stretch reads AKGSLKKAIS…LKSNVQLVCA (232 aa). ATP is bound by residues 145–152 and 215–224; these read GPTGSGKS and ANGGILFMDE. In terms of domain architecture, PRD 1 spans 468 to 573; the sequence is FVEDDVIQMT…HSIKSLKENK (106 aa). Residue histidine 503 is modified to Phosphohistidine. The 138-residue stretch at 574 to 711 folds into the PTS EIIA type-4 domain; that stretch reads RVGIIVAAHG…PAASGKKKAL (138 aa). Histidine 582 carries the post-translational modification Phosphohistidine; by HPr. In terms of domain architecture, PRD 2 spans 831 to 935; that stretch reads LNPHHVIDML…FAEEVHGQLF (105 aa). Position 866 is a phosphohistidine (histidine 866).

This sequence belongs to the transcriptional antiterminator BglG family. Possibly phosphorylated and inactivated by the PTS system.

Involved in positive regulation of the levanase operon which comprises the levDEFG genes for a fructose PTS system, and sacA for levanase. The sequence is that of Transcriptional regulatory protein LevR (levR) from Bacillus subtilis (strain 168).